The primary structure comprises 152 residues: 3-dehydroquinate dehydratase (152 aa).

The active-site Proton acceptor is the Tyr23. Substrate-binding residues include Asn74, His80, and Asp87. Residue His100 is the Proton donor of the active site. Substrate-binding positions include 101–102 (LS) and Arg111.

It belongs to the type-II 3-dehydroquinase family. Homododecamer.

It carries out the reaction 3-dehydroquinate = 3-dehydroshikimate + H2O. It functions in the pathway metabolic intermediate biosynthesis; chorismate biosynthesis; chorismate from D-erythrose 4-phosphate and phosphoenolpyruvate: step 3/7. Catalyzes a trans-dehydration via an enolate intermediate. The polypeptide is 3-dehydroquinate dehydratase (Clostridium botulinum (strain Langeland / NCTC 10281 / Type F)).